Consider the following 190-residue polypeptide: Potassium-transporting ATPase KdpC subunit (190 aa).

The helical transmembrane segment at 10-30 (TFIFLLLITGGVYPLLTTVLG) threads the bilayer.

This sequence belongs to the KdpC family. The system is composed of three essential subunits: KdpA, KdpB and KdpC.

It is found in the cell inner membrane. Its function is as follows. Part of the high-affinity ATP-driven potassium transport (or Kdp) system, which catalyzes the hydrolysis of ATP coupled with the electrogenic transport of potassium into the cytoplasm. This subunit acts as a catalytic chaperone that increases the ATP-binding affinity of the ATP-hydrolyzing subunit KdpB by the formation of a transient KdpB/KdpC/ATP ternary complex. This is Potassium-transporting ATPase KdpC subunit from Escherichia coli O139:H28 (strain E24377A / ETEC).